Reading from the N-terminus, the 913-residue chain is Zinc finger protein 112 (913 aa).

One can recognise a KRAB domain in the interval 8 to 79 (VTFKDVAVVF…ETETPRDGCS (72 aa)). Residue lysine 256 forms a Glycyl lysine isopeptide (Lys-Gly) (interchain with G-Cter in SUMO2) linkage. The C2H2-type 1; degenerate zinc-finger motif lies at 258-280 (YPCTGYRKAFSNDSSSEVHQQFH). A C2H2-type 2; degenerate zinc finger spans residues 443 to 465 (YNSEECGNGFSLASHFQDLQIVH). Residues 471–493 (YKRYVCSNSFSHNLYLQGHPKIH) form a C2H2-type 3; degenerate zinc finger. The C2H2-type 4; degenerate zinc finger occupies 497 to 519 (KPRKEHGNGFNWSSKLKDHQRVH). 13 C2H2-type zinc fingers span residues 525 to 547 (YKCN…QRVH), 553 to 575 (YKCE…QRVH), 581 to 603 (YKCE…QRVH), 609 to 631 (YKCE…QRVH), 637 to 659 (FKCE…QRVH), 665 to 687 (YKCE…QRVH), 693 to 715 (YQCD…QSVH), 721 to 743 (YICE…QRVH), 749 to 771 (YKCE…RRVH), 777 to 799 (YKCE…QRVH), 805 to 827 (YKCE…HRVH), 833 to 855 (YKCE…QRVH), and 861 to 883 (YKCD…QRVH). Lysine 890 participates in a covalent cross-link: Glycyl lysine isopeptide (Lys-Gly) (interchain with G-Cter in SUMO2).

It belongs to the krueppel C2H2-type zinc-finger protein family.

The protein resides in the nucleus. May be involved in transcriptional regulation. This is Zinc finger protein 112 (ZNF112) from Homo sapiens (Human).